The chain runs to 82 residues: MDSIISAASVIAAGLAIGLAAIGPGIGQGNAAGQAVEGIARQPEAENKIRGTLLLSLAFMEALTIYGLVVALALLFANPFNS.

The next 2 membrane-spanning stretches (helical) occupy residues isoleucine 4–proline 24 and leucine 57–alanine 77.

This sequence belongs to the ATPase C chain family. In terms of assembly, F-type ATPases have 2 components, F(1) - the catalytic core - and F(0) - the membrane proton channel. F(1) has five subunits: alpha(3), beta(3), gamma(1), delta(1), epsilon(1). F(0) has four main subunits: a(1), b(1), b'(1) and c(10-14). The alpha and beta chains form an alternating ring which encloses part of the gamma chain. F(1) is attached to F(0) by a central stalk formed by the gamma and epsilon chains, while a peripheral stalk is formed by the delta, b and b' chains.

The protein resides in the plastid. It is found in the chloroplast thylakoid membrane. In terms of biological role, f(1)F(0) ATP synthase produces ATP from ADP in the presence of a proton or sodium gradient. F-type ATPases consist of two structural domains, F(1) containing the extramembraneous catalytic core and F(0) containing the membrane proton channel, linked together by a central stalk and a peripheral stalk. During catalysis, ATP synthesis in the catalytic domain of F(1) is coupled via a rotary mechanism of the central stalk subunits to proton translocation. Its function is as follows. Key component of the F(0) channel; it plays a direct role in translocation across the membrane. A homomeric c-ring of between 10-14 subunits forms the central stalk rotor element with the F(1) delta and epsilon subunits. This is ATP synthase subunit c, chloroplastic from Thalassiosira pseudonana (Marine diatom).